The chain runs to 477 residues: Mitochondrial adenyl nucleotide antiporter SLC25A24 (477 aa).

The tract at residues 1-174 is regulatory N-terminal domain; it reads MHQLIRKFVF…RYWKKSTVLD (174 aa). The Mitochondrial intermembrane portion of the chain corresponds to 1–198; the sequence is MHQLIRKFVF…EKTTGMWWKQ (198 aa). An EF-hand 1 domain is found at 20–55; sequence DNTKSFAELFEKLDVNKDGKVDVSELKTGLAAMGFS. Residues Asp-33, Asn-35, Asp-37, Lys-39, Glu-44, Asp-69, Asp-71, Asp-73, Glu-80, Asp-100, Asn-102, Asp-104, Arg-106, Glu-111, Asp-136, Asp-138, Thr-140, Thr-142, and Glu-147 each contribute to the Ca(2+) site. 2 consecutive EF-hand domains span residues 87 to 122 and 123 to 158; these read EHEK…LGIN and LSDK…NPAE. Residues 160–169 are linker region; the sequence is LQQIIRYWKK. Residues 175–477 are C-terminal transmembrane transporter domain; it reads IGDSLTIPDE…YMRSGLGISK (303 aa). 3 Solcar repeats span residues 193-279, 287-372, and 384-472; these read GMWW…YKKL, VQSH…LKNT, and PGVL…MRSG. Residues 199-216 form a helical membrane-spanning segment; sequence LAAGGVAGAVSRTGTAPL. Residues 217–253 lie on the Mitochondrial matrix side of the membrane; the sequence is DRMKVFMQVHSSKTNKISLVNGFKQMIKEGGVASLWR. Residues 254 to 273 form a helical membrane-spanning segment; the sequence is GNGVNVIKIAPETAIKFMAY. At 274 to 296 the chain is on the mitochondrial intermembrane side; the sequence is EQYKKLLSKDGGKVQSHERFMAG. A helical membrane pass occupies residues 297–310; the sequence is SLAGATAQTAIYPM. Topologically, residues 311-346 are mitochondrial matrix; it reads EVMKTRLTLRKTGQYSGMFDCAKKILRKEGVKAFYK. Residues 347–366 traverse the membrane as a helical segment; the sequence is GYVPNILGIIPYAGIDLAVY. Residues 367–389 lie on the Mitochondrial intermembrane side of the membrane; that stretch reads ETLKNTWLSHYAKDTANPGVLVL. A helical transmembrane segment spans residues 390–407; the sequence is LGCGTISSTCGQLASYPL. Residues 408 to 446 are Mitochondrial matrix-facing; it reads ALIRTRMQAMASMEGSEQVSMSKLVKKIMQKEGFFGLYR. Residues 447–466 traverse the membrane as a helical segment; the sequence is GILPNFMKVIPAVSISYVVY. The Mitochondrial intermembrane portion of the chain corresponds to 467–477; it reads EYMRSGLGISK.

It belongs to the mitochondrial carrier (TC 2.A.29) family. In terms of assembly, monomer.

Its subcellular location is the mitochondrion inner membrane. The catalysed reaction is Mg(2+)(out) + phosphate(in) + ATP(out) = Mg(2+)(in) + phosphate(out) + ATP(in). It carries out the reaction ADP(out) + phosphate(in) + H(+)(out) = ADP(in) + phosphate(out) + H(+)(in). It catalyses the reaction AMP(out) + phosphate(in) = AMP(in) + phosphate(out). The enzyme catalyses phosphate(in) + ATP(out) + 2 H(+)(out) = phosphate(out) + ATP(in) + 2 H(+)(in). The catalysed reaction is dADP(in) + ADP(out) = dADP(out) + ADP(in). It carries out the reaction Mg(2+)(in) + ADP(out) + ATP(in) + H(+)(out) = Mg(2+)(out) + ADP(in) + ATP(out) + H(+)(in). It catalyses the reaction ADP(out) + diphosphate(in) = ADP(in) + diphosphate(out). The enzyme catalyses dAMP(in) + ADP(out) + H(+)(out) = dAMP(out) + ADP(in) + H(+)(in). The catalysed reaction is 3'-AMP(in) + ADP(out) + H(+)(out) = 3'-AMP(out) + ADP(in) + H(+)(in). It carries out the reaction dAMP(out) + phosphate(in) = dAMP(in) + phosphate(out). It catalyses the reaction 3'-AMP(out) + phosphate(in) = 3'-AMP(in) + phosphate(out). The enzyme catalyses dADP(out) + phosphate(in) + H(+)(out) = dADP(in) + phosphate(out) + H(+)(in). With respect to regulation, activated by an increase in cytosolic calcium levels that induce a conformational change of the N-terminal regulatory domain, uncapping the channel and allowing transport. Inhibited by bathophenanthroline, mersalyl, p-hydroxymercuribenzoate, bromcresol purple and tannic acid. Functionally, electroneutral antiporter that mediates the transport of adenyl nucleotides through the inner mitochondrial membrane. Originally identified as an ATP-magnesium/inorganic phosphate antiporter, it also acts as a broad specificity adenyl nucleotide antiporter. By regulating the mitochondrial matrix adenyl nucleotide pool could adapt to changing cellular energetic demands and indirectly regulate adenyl nucleotide-dependent metabolic pathways. In Danio rerio (Zebrafish), this protein is Mitochondrial adenyl nucleotide antiporter SLC25A24 (slc25a24).